The following is a 187-amino-acid chain: Isopentenyl-diphosphate Delta-isomerase (187 aa).

Residues His36, His43, and His80 each coordinate Mn(2+). The 138-residue stretch at 41–178 folds into the Nudix hydrolase domain; sequence VRHRAFTALL…RQLRLCPWFE (138 aa). Glu98 provides a ligand contact to Mg(2+). Glu127 and Glu129 together coordinate Mn(2+). Glu129 is a catalytic residue.

It belongs to the IPP isomerase type 1 family. Requires Mg(2+) as cofactor. The cofactor is Mn(2+).

The protein localises to the cytoplasm. The catalysed reaction is isopentenyl diphosphate = dimethylallyl diphosphate. It participates in isoprenoid biosynthesis; dimethylallyl diphosphate biosynthesis; dimethylallyl diphosphate from isopentenyl diphosphate: step 1/1. In terms of biological role, catalyzes the 1,3-allylic rearrangement of the homoallylic substrate isopentenyl (IPP) to its highly electrophilic allylic isomer, dimethylallyl diphosphate (DMAPP). This chain is Isopentenyl-diphosphate Delta-isomerase, found in Haloarcula marismortui (strain ATCC 43049 / DSM 3752 / JCM 8966 / VKM B-1809) (Halobacterium marismortui).